Reading from the N-terminus, the 365-residue chain is Class I histocompatibility antigen, B alpha chain (365 aa).

The first 24 residues, 1–24, serve as a signal peptide directing secretion; the sequence is MTVMAPRTLLLLLSGALVLTETWA. The tract at residues 25–114 is alpha-1; sequence GSHSMRYFST…ALGYYNQSEA (90 aa). Residues 25–308 are Extracellular-facing; that stretch reads GSHSMRYFST…EPPSQPTIPI (284 aa). N110 is a glycosylation site (N-linked (GlcNAc...) asparagine). An alpha-2 region spans residues 115–206; that stretch reads GSHTIQMMSG…ENGKETLQRA (92 aa). 2 disulfides stabilise this stretch: C125-C188 and C227-C283. Positions 207–298 are alpha-3; that stretch reads EPPKTHVTHH…GLPEPLTLRW (92 aa). The 89-residue stretch at 209–297 folds into the Ig-like C1-type domain; it reads PKTHVTHHPV…EGLPEPLTLR (89 aa). The interval 299 to 308 is connecting peptide; that stretch reads EPPSQPTIPI. A helical membrane pass occupies residues 309-332; that stretch reads MGIVAILAILGAVVTGAVVTAVMW. Residues 333-365 lie on the Cytoplasmic side of the membrane; the sequence is RKKSSDKKGGSYSQAARSDSAQGSDVSLTACKV. The segment at 337 to 361 is disordered; the sequence is SDKKGGSYSQAARSDSAQGSDVSLT. The segment covering 346-359 has biased composition (polar residues); sequence QAARSDSAQGSDVS. Residues S356 and S359 each carry the phosphoserine modification.

Belongs to the MHC class I family. In terms of assembly, heterodimer of an alpha chain and a beta chain (beta-2-microglobulin).

The protein localises to the membrane. In terms of biological role, involved in the presentation of foreign antigens to the immune system. This is Class I histocompatibility antigen, B alpha chain from Saguinus oedipus (Cotton-top tamarin).